Reading from the N-terminus, the 729-residue chain is MKIESLDLPDEVKQFYLNSGIMELYPPQAEAVEKGLLEGRNLLAAIPTASGKTLLAELAMLKSILAGGKALYIVPLRALASEKFRRFREFSELGIRVGISTGDYDLRDEGLGVNDIIVATSEKTDSLLRNETVWMQEISVVVADEVHLIDSPDRGPTLEVTLAKLRKMNPSCQILALSATVGNADELAVWLEAELVVSEWRPTELLEGVFFNGTFYCKDREKTVEQSTKDEAVNLALDTLKKDGQCLVFESSRKNCMAFAKKAASTVKKTLSAEDRNALAGIADEILENSETDTSTNLAVCIRSGTAFHHAGLTTPLRELVEDGFRAGRIKLISSTPTLAAGLNLPARRVIIRNYRRYSSEDGMQPIPVLEYKQMAGRAGRPRLDPYGEAVLVAKSYKEFVFLFENYIEANAEDIWSKLGTENALRTHVLSTISNGFARTYDELMDFLEATFFAFQYSNFGLSTVVNECLNFLRQEGMLEKDDALIPTSFGKLVSRLYIDPLSAARIAKGLKGAKSLSELTLLHLVCSTPDMRLLYMRSHDYQDINDYVMAHASEFVKVPSPFDTTEYEWFLGEVKTSLLLLDWIHEKSENEICLKFGTGEGDIHSIADIAEWIMHVTSQLAGLLDLKGAREAAELEKRIHYGAAPELIDLLNIRGIGRVRARKLYEAGFKSSAELAEVDPEKVAALLGPKIADRIFKQIRGRGTSSGIIASEPPEKSPYSGQKTISDY.

ATP is bound by residues Q28 and 46-53 (IPTASGKT). The 167-residue stretch at 33–199 (EKGLLEGRNL…WLEAELVVSE (167 aa)) folds into the Helicase ATP-binding domain. Residues 144–147 (DEVH) carry the DEAH box motif. One can recognise a Helicase C-terminal domain in the interval 232 to 426 (AVNLALDTLK…SKLGTENALR (195 aa)). Residues 706–729 (SSGIIASEPPEKSPYSGQKTISDY) form a disordered region. The segment covering 720 to 729 (YSGQKTISDY) has biased composition (polar residues).

It belongs to the helicase family. Hel308 subfamily. Monomer.

The catalysed reaction is Couples ATP hydrolysis with the unwinding of duplex DNA by translocating in the 3'-5' direction.. It carries out the reaction ATP + H2O = ADP + phosphate + H(+). Its function is as follows. DNA-dependent ATPase and 3'-5' DNA helicase that may be involved in repair of stalled replication forks. This is ATP-dependent DNA helicase Hel308 from Methanosarcina barkeri (strain Fusaro / DSM 804).